The following is a 193-amino-acid chain: uncharacterized protein (193 aa).

The N-terminal stretch at 1–22 (MAVQKNVIKGILAGTFALMLSG) is a signal peptide. C23 carries the N-palmitoyl cysteine lipid modification. C23 carries S-diacylglycerol cysteine lipidation.

The protein resides in the cell membrane. This is an uncharacterized protein from Escherichia coli (strain K12).